The sequence spans 622 residues: Kinesin light chain 2 (622 aa).

A coiled-coil region spans residues 78 to 143; it reads ILALSSHLGA…KQHLLFMSQI (66 aa). A compositionally biased stretch (basic and acidic residues) spans 145–164; the sequence is KLDEDASPNEEKGDVPKDTL. The disordered stretch occupies residues 145–191; it reads KLDEDASPNEEKGDVPKDTLDDLFPNEDEQSPAPSPGGGDVSGQHGG. Phosphoserine occurs at positions 151, 175, and 179. A compositionally biased stretch (gly residues) spans 180 to 190; sequence PGGGDVSGQHG. TPR repeat units follow at residues 198 to 231, 240 to 273, 282 to 315, 324 to 357, and 366 to 399; these read LRTL…LEKT, ATML…REKT, AATL…REKV, AKQL…YATR, and AKTK…AHEK. Position 445 is a phosphoserine (serine 445). Residues 449-482 form a TPR 6 repeat; the sequence is NTTLRSLGALYRRQGKLEAAHTLEDCASRNRKQG. Disordered stretches follow at residues 476–548 and 563–622; these read SRNR…SFGK and KLQG…SLVG. The segment covering 493-509 has biased composition (basic and acidic residues); the sequence is ELLKDGSGRRGDRRSSR. Residues serine 508 and serine 521 each carry the phosphoserine modification. Residues 538–547 show a composition bias toward low complexity; that stretch reads GSLRRSGSFG. Phosphoserine occurs at positions 581, 582, 589, 608, 610, and 615. The segment covering 601-622 has biased composition (low complexity); that stretch reads LSDSRTLSSSSMDLSRRSSLVG.

Belongs to the kinesin light chain family. As to quaternary structure, oligomeric complex composed of two heavy chains and two light chains. Interacts (via TPR repeats) with PLEKHM2.

It is found in the cytoplasm. It localises to the cytoskeleton. Its subcellular location is the lysosome membrane. Kinesin is a microtubule-associated force-producing protein that plays a role in organelle transport. The light chain functions in coupling of cargo to the heavy chain or in the modulation of its ATPase activity. Through binding with PLEKHM2 and ARL8B, recruits kinesin-1 to lysosomes and hence direct lysosomes movement toward microtubule plus ends. This is Kinesin light chain 2 from Homo sapiens (Human).